A 775-amino-acid chain; its full sequence is tRNA(Met) cytidine acetyltransferase TmcA (775 aa).

2 disordered regions span residues 1-33 and 191-215; these read MPTT…GMDI and TVEQ…PTDA. Pro residues predominate over residues 199-212; the sequence is DPPPSRPVPSPTPP. ATP contacts are provided by residues Gln230, 254-263, and Arg403; that span reads GRGKSSAAGL. In terms of domain architecture, N-acetyltransferase spans 438 to 623; sequence VEYRQLSAAD…YSVVMLDPCS (186 aa). Residues 549–551, 556–562, and Glu588 contribute to the acetyl-CoA site; these read IAT and RSRGLGS.

This sequence belongs to the RNA cytidine acetyltransferase family. TmcA subfamily.

The protein resides in the cytoplasm. It catalyses the reaction cytidine(34) in elongator tRNA(Met) + acetyl-CoA + ATP + H2O = N(4)-acetylcytidine(34) in elongator tRNA(Met) + ADP + phosphate + CoA + H(+). Functionally, catalyzes the formation of N(4)-acetylcytidine (ac(4)C) at the wobble position of tRNA(Met), by using acetyl-CoA as an acetyl donor and ATP (or GTP). The polypeptide is tRNA(Met) cytidine acetyltransferase TmcA (Haloarcula marismortui (strain ATCC 43049 / DSM 3752 / JCM 8966 / VKM B-1809) (Halobacterium marismortui)).